A 573-amino-acid chain; its full sequence is Proline--tRNA ligase (573 aa).

Belongs to the class-II aminoacyl-tRNA synthetase family. ProS type 1 subfamily. Homodimer.

It localises to the cytoplasm. The enzyme catalyses tRNA(Pro) + L-proline + ATP = L-prolyl-tRNA(Pro) + AMP + diphosphate. In terms of biological role, catalyzes the attachment of proline to tRNA(Pro) in a two-step reaction: proline is first activated by ATP to form Pro-AMP and then transferred to the acceptor end of tRNA(Pro). As ProRS can inadvertently accommodate and process non-cognate amino acids such as alanine and cysteine, to avoid such errors it has two additional distinct editing activities against alanine. One activity is designated as 'pretransfer' editing and involves the tRNA(Pro)-independent hydrolysis of activated Ala-AMP. The other activity is designated 'posttransfer' editing and involves deacylation of mischarged Ala-tRNA(Pro). The misacylated Cys-tRNA(Pro) is not edited by ProRS. In Cupriavidus necator (strain ATCC 17699 / DSM 428 / KCTC 22496 / NCIMB 10442 / H16 / Stanier 337) (Ralstonia eutropha), this protein is Proline--tRNA ligase.